The primary structure comprises 624 residues: Chaperone protein HtpG (624 aa).

An a; substrate-binding region spans residues 1 to 336 (MKGQETRGFQ…SNDLPLNVSR (336 aa)). The tract at residues 337–552 (EILQDSTVTR…ADEMGTQMAK (216 aa)) is b. Positions 553 to 624 (LFAAAGQAMP…IKRVNALLLG (72 aa)) are c.

This sequence belongs to the heat shock protein 90 family. Homodimer.

It is found in the cytoplasm. In terms of biological role, molecular chaperone. Has ATPase activity. This Enterobacter sp. (strain 638) protein is Chaperone protein HtpG.